We begin with the raw amino-acid sequence, 246 residues long: E3 ubiquitin ligase TRIM40 (246 aa).

Residues 12–55 (CPICLDPLKEAVSTDCRHLFCRMCLTQHMDKASVSGILSCPVCR) form an RING-type zinc finger. A B box-type zinc finger spans residues 64–105 (GDNYICHTHQKRVRRFCEASGHLLCEECLQSPEHQSHTELSI). Zn(2+)-binding residues include Cys69, His72, Cys91, and His97. Residues 105–170 (IENAISHYKE…DQTKEQLKAL (66 aa)) are a coiled coil.

The protein belongs to the TRIM/RBCC family. In terms of assembly, interacts with NEDD8.

It catalyses the reaction S-ubiquitinyl-[E2 ubiquitin-conjugating enzyme]-L-cysteine + [acceptor protein]-L-lysine = [E2 ubiquitin-conjugating enzyme]-L-cysteine + N(6)-ubiquitinyl-[acceptor protein]-L-lysine.. Its function is as follows. E3 ubiquitin-protein ligase that plays a role in the limitation of the innate immune response. Mediates inhibition of the RLR signaling pathway by ubiquitinating RIGI and IFIH1 receptors, leading to their proteasomal degradation. Also promotes the neddylation of IKBKG/NEMO, stabilizing NFKBIA, and thereby inhibiting of NF-kappa-B nuclear translocation and activation. The protein is E3 ubiquitin ligase TRIM40 (Trim40) of Mus musculus (Mouse).